An 833-amino-acid polypeptide reads, in one-letter code: Probable serine/threonine-protein kinase DDB_G0277165 (833 aa).

Residues 9 to 262 enclose the Protein kinase domain; it reads FIIGKTLGQG…IKEIKEHPWF (254 aa). Residues 15 to 23 and K38 contribute to the ATP site; that span reads LGQGTTGKV. D133 functions as the Proton acceptor in the catalytic mechanism. Residues 288 to 329 enclose the UBA domain; the sequence is QIDEDIFRSLMALGVGTIDEVKQQLVSNQKSATLIYYRLLEE. Over residues 338 to 351 the composition is skewed to basic and acidic residues; sequence NKYGYKPKETRRNS. Disordered stretches follow at residues 338-472, 528-626, and 764-799; these read NKYG…ISPS, QALQ…PIEI, and FINP…GGQN. Low complexity-rich tracts occupy residues 365-432 and 441-459; these read NNNN…NNNN and SSSQ…QIPS. Polar residues predominate over residues 460 to 472; the sequence is NSTSQESMQISPS. The segment covering 528 to 589 has biased composition (low complexity); sequence QALQQHHQQQ…SSTSTSPQLS (62 aa). Residues 600 to 625 are compositionally biased toward polar residues; that stretch reads GSMTASTNPATSPTMSHRGKTSSPIE.

This sequence belongs to the protein kinase superfamily. CAMK Ser/Thr protein kinase family.

It catalyses the reaction L-seryl-[protein] + ATP = O-phospho-L-seryl-[protein] + ADP + H(+). The enzyme catalyses L-threonyl-[protein] + ATP = O-phospho-L-threonyl-[protein] + ADP + H(+). The chain is Probable serine/threonine-protein kinase DDB_G0277165 from Dictyostelium discoideum (Social amoeba).